The primary structure comprises 478 residues: ATP synthase subunit beta (478 aa).

Residue 160–167 (GGAGVGKT) participates in ATP binding.

This sequence belongs to the ATPase alpha/beta chains family. In terms of assembly, F-type ATPases have 2 components, CF(1) - the catalytic core - and CF(0) - the membrane proton channel. CF(1) has five subunits: alpha(3), beta(3), gamma(1), delta(1), epsilon(1). CF(0) has three main subunits: a(1), b(2) and c(9-12). The alpha and beta chains form an alternating ring which encloses part of the gamma chain. CF(1) is attached to CF(0) by a central stalk formed by the gamma and epsilon chains, while a peripheral stalk is formed by the delta and b chains.

It is found in the cell inner membrane. It catalyses the reaction ATP + H2O + 4 H(+)(in) = ADP + phosphate + 5 H(+)(out). Functionally, produces ATP from ADP in the presence of a proton gradient across the membrane. The catalytic sites are hosted primarily by the beta subunits. This chain is ATP synthase subunit beta, found in Orientia tsutsugamushi (strain Ikeda) (Rickettsia tsutsugamushi).